The chain runs to 40 residues: Small polypeptide DEVIL 6 (40 aa).

Residues 9 to 40 (SSSRGLGGVLREQRAKLYIIKRCVVMLLCWQD) form a required for DVL/RTFL small polypeptide activity region. A helical membrane pass occupies residues 12 to 28 (RGLGGVLREQRAKLYII).

It belongs to the DVL/RTFL small polypeptides family.

It is found in the cell membrane. Functionally, small polypeptide acting as a regulatory molecule which coordinates cellular responses required for differentiation, growth and development, probably by restricting polar cell proliferation in lateral organs and coordinating socket cell recruitment and differentiation at trichome sites. The chain is Small polypeptide DEVIL 6 from Arabidopsis thaliana (Mouse-ear cress).